The primary structure comprises 289 residues: Thymidylate synthase (289 aa).

Residues R21 and 150–151 each bind dUMP; that span reads RR. Catalysis depends on C170, which acts as the Nucleophile. Residues 191–194, N202, and 232–234 each bind dUMP; these read RSAD and HIY. Position 194 (D194) interacts with (6R)-5,10-methylene-5,6,7,8-tetrahydrofolate. A (6R)-5,10-methylene-5,6,7,8-tetrahydrofolate-binding site is contributed by A288.

It belongs to the thymidylate synthase family. Bacterial-type ThyA subfamily. As to quaternary structure, homodimer.

It is found in the cytoplasm. It carries out the reaction dUMP + (6R)-5,10-methylene-5,6,7,8-tetrahydrofolate = 7,8-dihydrofolate + dTMP. Its pathway is pyrimidine metabolism; dTTP biosynthesis. Its function is as follows. Catalyzes the reductive methylation of 2'-deoxyuridine-5'-monophosphate (dUMP) to 2'-deoxythymidine-5'-monophosphate (dTMP) while utilizing 5,10-methylenetetrahydrofolate (mTHF) as the methyl donor and reductant in the reaction, yielding dihydrofolate (DHF) as a by-product. This enzymatic reaction provides an intracellular de novo source of dTMP, an essential precursor for DNA biosynthesis. The sequence is that of Thymidylate synthase from Malacoplasma penetrans (strain HF-2) (Mycoplasma penetrans).